The chain runs to 375 residues: Tyrosine--tRNA ligase (375 aa).

The L-tyrosine site is built by Y37, Y168, Q172, D175, and Q190. Residues 251–255 (KMSKS) carry the 'KMSKS' region motif. K254 serves as a coordination point for ATP.

This sequence belongs to the class-I aminoacyl-tRNA synthetase family. TyrS type 4 subfamily. Homodimer.

Its subcellular location is the cytoplasm. It carries out the reaction tRNA(Tyr) + L-tyrosine + ATP = L-tyrosyl-tRNA(Tyr) + AMP + diphosphate + H(+). Functionally, catalyzes the attachment of tyrosine to tRNA(Tyr) in a two-step reaction: tyrosine is first activated by ATP to form Tyr-AMP and then transferred to the acceptor end of tRNA(Tyr). In Pyrococcus furiosus (strain ATCC 43587 / DSM 3638 / JCM 8422 / Vc1), this protein is Tyrosine--tRNA ligase.